Here is a 138-residue protein sequence, read N- to C-terminus: Protein transport protein got1 homolog (138 aa).

The Cytoplasmic portion of the chain corresponds to 1–7 (MFTDQQK). A helical membrane pass occupies residues 8–28 (IGAMLSAMGLFFGFLGVLLFL). Over 29 to 30 (DR) the chain is Lumenal. Residues 31–51 (NLLALGNLLLVSGIVLILGLQ) form a helical membrane-spanning segment. Topologically, residues 52–62 (KTTKFFAQKKK) are cytoplasmic. The helical transmembrane segment at 63–82 (IKGTILFFFGIVVLLVTRWT) threads the bilayer. The Lumenal segment spans residues 83–87 (FVGMV). A helical transmembrane segment spans residues 88 to 108 (IEIFGFVNLFGDAFPIVISIL). Residues 109-138 (RKLPIIGNILNHPLVNRLLQKADSGNELPF) lie on the Cytoplasmic side of the membrane.

This sequence belongs to the GOT1 family.

The protein resides in the golgi apparatus membrane. Its function is as follows. May be involved in fusion of ER-derived transport vesicles with the Golgi complex. This Dictyostelium discoideum (Social amoeba) protein is Protein transport protein got1 homolog (golt1).